Here is a 412-residue protein sequence, read N- to C-terminus: NF-kappa-B essential modulator (412 aa).

The interval 1-48 is disordered; that stretch reads MNKHPWKNQLSEMVQPSGGPAEDQDMLGEESSLGKPAMLHLPSEQGTP. Positions 1–197 are required for interaction with and ubiquitination by MARCHF2; it reads MNKHPWKNQL…REVLQQQHSV (197 aa). A phosphoserine; by IKKB mark is found at S31 and S43. The segment at 44–111 is interaction with CHUK/IKBKB; sequence EQGTPETLQR…KLVERLSLEK (68 aa). Positions 49 to 345 form a coiled coil; the sequence is ETLQRCLEEN…LKVGCHESAR (297 aa). The residue at position 68 (S68) is a Phosphoserine. Phosphoserine; by ATM is present on S85. Glycyl lysine isopeptide (Lys-Gly) (interchain with G-Cter in ubiquitin) cross-links involve residues K111, K139, K143, K226, and K246. The interval 150-250 is interaction with TANK; the sequence is LGELQESQSR…YDSHIKSSKG (101 aa). A ubiquitin-binding (UBAN) region spans residues 242–343; that stretch reads DSHIKSSKGM…NKLKVGCHES (102 aa). Residues 246-358 are self-association; sequence KSSKGMQLED…MRKRHVETPQ (113 aa). The tract at residues 249 to 412 is required for interaction with TNFAIP3; sequence KGMQLEDLRQ…LQIHVMECIE (164 aa). The tract at residues 250–339 is linear polyubiquitin-binding, does not bind to 'Lys-63'-linked polyubiquitin; sequence GMQLEDLRQQ…QREFNKLKVG (90 aa). K270 participates in a covalent cross-link: Glycyl lysine isopeptide (Lys-Gly) (interchain with G-Cter in SUMO); alternate. Residue K270 forms a Glycyl lysine isopeptide (Lys-Gly) (interchain with G-Cter in ubiquitin); alternate linkage. Glycyl lysine isopeptide (Lys-Gly) (interchain with G-Cter in ubiquitin) cross-links involve residues K276, K278, K285, and K295. K302 is covalently cross-linked (Glycyl lysine isopeptide (Lys-Gly) (interchain with G-Cter in SUMO); alternate). K302 participates in a covalent cross-link: Glycyl lysine isopeptide (Lys-Gly) (interchain with G-Cter in ubiquitin); alternate. Residues K314, K318, and K319 each participate in a glycyl lysine isopeptide (Lys-Gly) (interchain with G-Cter in ubiquitin) cross-link. The leucine-zipper stretch occupies residues 315–336; it reads LVEKKEYLQEQLEQLQREFNKL. S369 carries the post-translational modification Phosphoserine; by IKKB. Positions 375–412 are interaction with CYLD; that stretch reads SNQRRSPPEEPPDFCCPKCQYQAPDMDTLQIHVMECIE. S380 bears the Phosphoserine mark. Residues 382–412 form a CCHC NOA-type zinc finger; the sequence is PEEPPDFCCPKCQYQAPDMDTLQIHVMECIE. Zn(2+) is bound at residue C390. A Glycyl lysine isopeptide (Lys-Gly) (interchain with G-Cter in ubiquitin) cross-link involves residue K392. Zn(2+)-binding residues include C393, H406, and C410.

As to quaternary structure, homodimer; disulfide-linked. Component of the I-kappa-B-kinase (IKK) core complex consisting of CHUK, IKBKB and IKBKG; probably four alpha/CHUK-beta/IKBKB dimers are associated with four gamma/IKBKG subunits. The IKK core complex seems to associate with regulatory or adapter proteins to form a IKK-signalosome holo-complex. The IKK complex associates with TERF2IP/RAP1, leading to promote IKK-mediated phosphorylation of RELA/p65. Part of a complex composed of NCOA2, NCOA3, CHUK/IKKA, IKBKB, IKBKG and CREBBP. Interacts with COPS3, CYLD, NALP2, TRPC4AP and PIDD1. Interacts with ATM; the complex is exported from the nucleus. Interacts with TRAF6. Interacts with IKBKE. Interacts with TANK; the interaction is enhanced by IKBKE and TBK1. Part of a ternary complex consisting of TANK, IKBKB and IKBKG. Interacts with ZFAND5. Interacts with RIPK2. Interacts with TNIP1 and TNFAIP3; TNIP1 facilitates the TNFAIP3-mediated de-ubiquitination of IKBKG. Interacts with TNFAIP3; the interaction is induced by TNF stimulation and by polyubiquitin. Binds (via UBAN region) polyubiquitin; binds both 'Lys-63'-linked and linear polyubiquitin, with higher affinity for linear ubiquitin. Interacts with NLRP10. Interacts with TANK; this interaction increases in response to DNA damage. Interacts with USP10; this interaction increases in response to DNA damage. Interacts with ZC3H12A; this interaction increases in response to DNA damage. Interacts with IFIT5; the interaction synergizes the recruitment of IKK to MAP3K7 and enhances IKK phosphorylation. Interacts with TRIM29; this interaction induces IKBKG/NEMO ubiquitination and proteolytic degradation. Interacts with TRIM13; this interaction leads to IKBKG/NEMO ubiquitination. Interacts with ARFIP2. Interacts with RIPK1. Interacts with (ubiquitinated) BCL10; interaction with polyubiquitinated BCL10 via both 'Lys-63'-linked and linear ubiquitin is required for TCR-induced NF-kappa-B activation. Interacts with MARCHF2; during the late stages of macrophage viral and bacterial infection; the interaction leads to ubiquitination and degradation of IKBKG/NEMO. Phosphorylation at Ser-68 attenuates aminoterminal homodimerization. Post-translationally, polyubiquitinated on Lys-278 via 'Lys-63'-linked ubiquitin; the ubiquitination is mediated downstream of NOD2 and RIPK2 and probably plays a role in signaling by facilitating interactions with ubiquitin domain-containing proteins and activates the NF-kappa-B pathway. Polyubiquitinated on Lys-278 and Lys-302 through 'Lys-63'-linked ubiquitin; the ubiquitination is mediated by BCL10, MALT1 and TRAF6 and probably plays a role in signaling by facilitating interactions with ubiquitin domain-containing proteins and activates the NF-kappa-B pathway. Monoubiquitinated on Lys-270 and Lys-302; promotes nuclear export. Polyubiquitinated through 'Lys-27' by TRIM23; involved in antiviral innate and inflammatory responses. Linear polyubiquitinated on Lys-111, Lys-143, Lys-226, Lys-246, Lys-270, Lys-278, Lys-285, Lys-295, Lys-302 and Lys-319; the head-to-tail polyubiquitination is mediated by the LUBAC complex and plays a key role in NF-kappa-B activation. Deubiquitinated by USP10 in a TANK-dependent and -independent manner, leading to the negative regulation of NF-kappa-B signaling upon DNA damage. Ubiquitinated at Lys-319 by MARCHF2 following bacterial and viral infection which leads to its degradation. Polyubiquitinated via 'Lys-29'-linked ubiquitin; leading to lysosomal degradation. In terms of processing, sumoylated on Lys-270 and Lys-302 with SUMO1; the modification results in phosphorylation of Ser-85 by ATM leading to a replacement of the sumoylation by mono-ubiquitination on these residues. Neddylated by TRIM40, resulting in stabilization of NFKBIA and down-regulation of NF-kappa-B activity.

It is found in the cytoplasm. The protein resides in the nucleus. In terms of biological role, regulatory subunit of the IKK core complex which phosphorylates inhibitors of NF-kappa-B thus leading to the dissociation of the inhibitor/NF-kappa-B complex and ultimately the degradation of the inhibitor. Its binding to scaffolding polyubiquitin plays a key role in IKK activation by multiple signaling receptor pathways. Can recognize and bind both 'Lys-63'-linked and linear polyubiquitin upon cell stimulation, with a much highr affinity for linear polyubiquitin. Could be implicated in NF-kappa-B-mediated protection from cytokine toxicity. Essential for viral activation of IRF3. Involved in TLR3- and IFIH1-mediated antiviral innate response; this function requires 'Lys-27'-linked polyubiquitination. In Mus musculus (Mouse), this protein is NF-kappa-B essential modulator (Ikbkg).